The primary structure comprises 410 residues: HAUS augmin-like complex subunit 8 (410 aa).

Positions M1–L104 are disordered. An N-acetylalanine modification is found at A2. S105 is modified (phosphoserine). The interval Q118 to S143 is disordered. The stretch at L156–L208 forms a coiled coil. Positions A353–S410 are disordered. Residues G373–I384 show a composition bias toward polar residues. Low complexity predominate over residues S385–S394.

Belongs to the HAUS8 family. As to quaternary structure, component of the HAUS augmin-like complex. The complex interacts with the gamma-tubulin ring complex and this interaction is required for spindle assembly. Associates with microtubules. The interaction with microtubules is strong during mitosis, while it is weak or absent during interphase. It is unclear whether this interaction is direct or indirect. Interacts with EML3 (phosphorylated at 'Thr-881') and TUBG1.

The protein resides in the cytoplasm. It localises to the cytoskeleton. The protein localises to the microtubule organizing center. Its subcellular location is the centrosome. It is found in the spindle. The protein resides in the spindle pole. In terms of biological role, contributes to mitotic spindle assembly, maintenance of centrosome integrity and completion of cytokinesis as part of the HAUS augmin-like complex. The chain is HAUS augmin-like complex subunit 8 (HAUS8) from Homo sapiens (Human).